Reading from the N-terminus, the 92-residue chain is MEKSDRRSEESHLWIPLQCLDQTLRAILKCLGLFHQDSPTTSSPGTSKQPKEEKEDVTMEKEEVVVTSRATKVKAKQRGKEKVSSGRPGQHN.

A propeptide spanning residues 1-69 is cleaved from the precursor; that stretch reads MEKSDRRSEE…EKEEVVVTSR (69 aa). Residues 35–92 form a disordered region; it reads HQDSPTTSSPGTSKQPKEEKEDVTMEKEEVVVTSRATKVKAKQRGKEKVSSGRPGQHN. Polar residues predominate over residues 37-48; that stretch reads DSPTTSSPGTSK. Residues 49–64 show a composition bias toward basic and acidic residues; the sequence is QPKEEKEDVTMEKEEV.

It belongs to the brassicaceae elicitor peptide family. Interacts with its receptor PEPR1.

Its function is as follows. Elicitor of plant defense. Induces the production of plant defensin (PDF1.2) and of H(2)O(2). Promotes resistance to the root fungal pathogen P.irregulare. Triggers the expression of several PROSCOOP genes (e.g. PROSCOOP2, PROSCOOP7, PROSCOOP8, PROSCOOP12 and PROSCOOP13). The sequence is that of Precursor of elicitor peptide 1 from Arabidopsis thaliana (Mouse-ear cress).